Reading from the N-terminus, the 485-residue chain is Bifunctional protein HldE (485 aa).

The ribokinase stretch occupies residues 1 to 326 (MDFSSTRVLC…AELDESAISN (326 aa)). Residue 195–198 (NVKE) coordinates ATP. Residue Asp271 is part of the active site. The segment at 354-485 (FTNGCFDILH…GIVKKISTLT (132 aa)) is cytidylyltransferase.

This sequence in the N-terminal section; belongs to the carbohydrate kinase PfkB family. It in the C-terminal section; belongs to the cytidylyltransferase family. As to quaternary structure, homodimer.

The enzyme catalyses D-glycero-beta-D-manno-heptose 7-phosphate + ATP = D-glycero-beta-D-manno-heptose 1,7-bisphosphate + ADP + H(+). The catalysed reaction is D-glycero-beta-D-manno-heptose 1-phosphate + ATP + H(+) = ADP-D-glycero-beta-D-manno-heptose + diphosphate. Its pathway is nucleotide-sugar biosynthesis; ADP-L-glycero-beta-D-manno-heptose biosynthesis; ADP-L-glycero-beta-D-manno-heptose from D-glycero-beta-D-manno-heptose 7-phosphate: step 1/4. It functions in the pathway nucleotide-sugar biosynthesis; ADP-L-glycero-beta-D-manno-heptose biosynthesis; ADP-L-glycero-beta-D-manno-heptose from D-glycero-beta-D-manno-heptose 7-phosphate: step 3/4. Catalyzes the phosphorylation of D-glycero-D-manno-heptose 7-phosphate at the C-1 position to selectively form D-glycero-beta-D-manno-heptose-1,7-bisphosphate. In terms of biological role, catalyzes the ADP transfer from ATP to D-glycero-beta-D-manno-heptose 1-phosphate, yielding ADP-D-glycero-beta-D-manno-heptose. The polypeptide is Bifunctional protein HldE (Granulibacter bethesdensis (strain ATCC BAA-1260 / CGDNIH1)).